Reading from the N-terminus, the 159-residue chain is Transcriptional repressor NrdR (159 aa).

A zinc finger spans residues 3–34 (CPFCHTPDTSVIDSRVSEEGDRIRRRRRCPHC). An ATP-cone domain is found at 49–139 (PQVVKQDGNR…VYRSFQGAAD (91 aa)).

It belongs to the NrdR family. Zn(2+) is required as a cofactor.

In terms of biological role, negatively regulates transcription of bacterial ribonucleotide reductase nrd genes and operons by binding to NrdR-boxes. The sequence is that of Transcriptional repressor NrdR from Nitrosospira multiformis (strain ATCC 25196 / NCIMB 11849 / C 71).